The sequence spans 332 residues: tRNA-dihydrouridine synthase B (332 aa).

FMN contacts are provided by residues 19–21 (PMA) and Q73. C103 (proton donor) is an active-site residue. FMN-binding positions include K142, 203 to 205 (NGD), and 227 to 228 (GR).

This sequence belongs to the Dus family. DusB subfamily. FMN is required as a cofactor.

It catalyses the reaction a 5,6-dihydrouridine in tRNA + NAD(+) = a uridine in tRNA + NADH + H(+). The enzyme catalyses a 5,6-dihydrouridine in tRNA + NADP(+) = a uridine in tRNA + NADPH + H(+). Its function is as follows. Catalyzes the synthesis of 5,6-dihydrouridine (D), a modified base found in the D-loop of most tRNAs, via the reduction of the C5-C6 double bond in target uridines. This Pseudomonas aeruginosa (strain ATCC 15692 / DSM 22644 / CIP 104116 / JCM 14847 / LMG 12228 / 1C / PRS 101 / PAO1) protein is tRNA-dihydrouridine synthase B.